A 223-amino-acid chain; its full sequence is RNA-free ribonuclease P (223 aa).

It belongs to the HARP family.

It catalyses the reaction Endonucleolytic cleavage of RNA, removing 5'-extranucleotides from tRNA precursor.. Functionally, RNA-free RNase P that catalyzes the removal of the 5'-leader sequence from pre-tRNA to produce the mature 5'-terminus. This is RNA-free ribonuclease P from Methanococcus maripaludis (strain C7 / ATCC BAA-1331).